The following is a 39-amino-acid chain: Photosystem II reaction center protein L (39 aa).

The helical transmembrane segment at 18-38 (SLYLGLLLVFVTGVLFSSYFF) threads the bilayer.

Belongs to the PsbL family. PSII is composed of 1 copy each of membrane proteins PsbA, PsbB, PsbC, PsbD, PsbE, PsbF, PsbH, PsbI, PsbJ, PsbK, PsbL, PsbM, PsbT, PsbX, PsbY, PsbZ, Psb30/Ycf12, at least 3 peripheral proteins of the oxygen-evolving complex and a large number of cofactors. It forms dimeric complexes.

Its subcellular location is the plastid. The protein resides in the organellar chromatophore thylakoid membrane. Its function is as follows. One of the components of the core complex of photosystem II (PSII). PSII is a light-driven water:plastoquinone oxidoreductase that uses light energy to abstract electrons from H(2)O, generating O(2) and a proton gradient subsequently used for ATP formation. It consists of a core antenna complex that captures photons, and an electron transfer chain that converts photonic excitation into a charge separation. This subunit is found at the monomer-monomer interface and is required for correct PSII assembly and/or dimerization. In Paulinella chromatophora, this protein is Photosystem II reaction center protein L.